An 880-amino-acid polypeptide reads, in one-letter code: GATOR2 complex protein MIOS-A (880 aa).

6 WD repeats span residues 60–102, 113–157, 185–224, 226–264, 268–309, and 399–441; these read SDTP…NSKC, KHAR…TPEV, GQNDACLSLCWLPRDQKLLLAGMHRNLAIFDLRNTNQKMF, NTKAVQGVTVDPHFHDRVASFFEGQVAIWDLRKFEKPVL, EQPK…TPIG, and RLRA…KQYA. The C4-type zinc finger occupies 740–786; the sequence is VSCNFCGKSISYSCSSVPHQGRGFSQYGVSGSPTKSKFTSCPGCRKP. Cysteine 742, cysteine 745, cysteine 780, cysteine 783, cysteine 793, cysteine 832, cysteine 835, histidine 837, histidine 840, histidine 843, cysteine 854, cysteine 859, and cysteine 863 together coordinate Zn(2+). The RING-type; atypical zinc-finger motif lies at 787-868; the sequence is LPRCALCLIN…CSCKCMQLDT (82 aa).

This sequence belongs to the WD repeat mio family. Component of the GATOR2 subcomplex, composed of MIOS, SEC13, SEH1L, WDR24 and WDR59. The GATOR2 complex interacts with CASTOR1 and CASTOR2; the interaction is negatively regulated by arginine. The GATOR2 complex interacts with SESN1, SESN2 and SESN3; the interaction is negatively regulated by amino acids. Interacts with SAR1; the interaction is direct, disrupted by leucine and mediates the interaction of SAR1 with the GATOR2 complex to negatively regulate the TORC1 signaling upon leucine deprivation.

It localises to the lysosome membrane. With respect to regulation, the GATOR2 complex is negatively regulated by the upstream amino acid sensors CASTOR1 and SESN2, which sequester the GATOR2 complex in absence of amino acids. In the presence of abundant amino acids, GATOR2 is released from CASTOR1 and SESN2 and activated. Functionally, as a component of the GATOR2 complex, functions as an activator of the amino acid-sensing branch of the mTORC1 signaling pathway. The GATOR2 complex indirectly activates mTORC1 through the inhibition of the GATOR1 subcomplex. GATOR2 probably acts as an E3 ubiquitin-protein ligase toward GATOR1. In the presence of abundant amino acids, the GATOR2 complex mediates ubiquitination of the NPRL2 core component of the GATOR1 complex, leading to GATOR1 inactivation. In the absence of amino acids, GATOR2 is inhibited, activating the GATOR1 complex. Within the GATOR2 complex, MIOS is required to prevent autoubiquitination of WDR24, the catalytic subunit of the complex. The chain is GATOR2 complex protein MIOS-A from Xenopus laevis (African clawed frog).